We begin with the raw amino-acid sequence, 437 residues long: Protein farnesyltransferase subunit beta (437 aa).

5 PFTB repeats span residues 123–164 (ATDV…CIIG), 174–215 (REKL…SLTN), 222–263 (FEGT…VILK), 270–312 (LKSL…PLLH), and 332–374 (QQAL…SIAQ). (2E,6E)-farnesyl diphosphate contacts are provided by residues 248–251 (HGGY) and 291–294 (RCNK). Zn(2+) contacts are provided by Asp-297 and Cys-299. A (2E,6E)-farnesyl diphosphate-binding site is contributed by 300-303 (YSFW). His-362 is a Zn(2+) binding site. Phosphoserine is present on Ser-432. A Phosphothreonine modification is found at Thr-436.

Belongs to the protein prenyltransferase subunit beta family. As to quaternary structure, heterodimer of FNTA and FNTB. Requires Zn(2+) as cofactor.

The catalysed reaction is L-cysteinyl-[protein] + (2E,6E)-farnesyl diphosphate = S-(2E,6E)-farnesyl-L-cysteinyl-[protein] + diphosphate. Its function is as follows. Essential subunit of the farnesyltransferase complex. Catalyzes the transfer of a farnesyl moiety from farnesyl diphosphate to a cysteine at the fourth position from the C-terminus of several proteins having the C-terminal sequence Cys-aliphatic-aliphatic-X. The polypeptide is Protein farnesyltransferase subunit beta (Fntb) (Mus musculus (Mouse)).